Here is a 248-residue protein sequence, read N- to C-terminus: 1-(5-phosphoribosyl)-5-[(5-phosphoribosylamino)methylideneamino] imidazole-4-carboxamide isomerase (248 aa).

D8 functions as the Proton acceptor in the catalytic mechanism. Residue D129 is the Proton donor of the active site.

This sequence belongs to the HisA/HisF family.

Its subcellular location is the cytoplasm. The catalysed reaction is 1-(5-phospho-beta-D-ribosyl)-5-[(5-phospho-beta-D-ribosylamino)methylideneamino]imidazole-4-carboxamide = 5-[(5-phospho-1-deoxy-D-ribulos-1-ylimino)methylamino]-1-(5-phospho-beta-D-ribosyl)imidazole-4-carboxamide. It functions in the pathway amino-acid biosynthesis; L-histidine biosynthesis; L-histidine from 5-phospho-alpha-D-ribose 1-diphosphate: step 4/9. The chain is 1-(5-phosphoribosyl)-5-[(5-phosphoribosylamino)methylideneamino] imidazole-4-carboxamide isomerase from Sinorhizobium medicae (strain WSM419) (Ensifer medicae).